Here is a 175-residue protein sequence, read N- to C-terminus: ATP-dependent protease subunit HslV (175 aa).

The active site involves T2. Residues A156, C159, and T162 each coordinate Na(+).

Belongs to the peptidase T1B family. HslV subfamily. In terms of assembly, a double ring-shaped homohexamer of HslV is capped on each side by a ring-shaped HslU homohexamer. The assembly of the HslU/HslV complex is dependent on binding of ATP.

It is found in the cytoplasm. It carries out the reaction ATP-dependent cleavage of peptide bonds with broad specificity.. Its activity is regulated as follows. Allosterically activated by HslU binding. In terms of biological role, protease subunit of a proteasome-like degradation complex believed to be a general protein degrading machinery. This Rhizobium rhizogenes (strain K84 / ATCC BAA-868) (Agrobacterium radiobacter) protein is ATP-dependent protease subunit HslV.